The chain runs to 183 residues: Streptavidin-V1 (183 aa).

Residues 1-24 form the signal peptide; the sequence is MRKIVVAAIAVSLTTVSITASASA. In terms of domain architecture, Avidin-like spans 37-159; it reads AEAGITGTWY…GHDTFTKVKP (123 aa). Positions 67 and 78 each coordinate biotin. Positions 83 to 85 match the Cell attachment site; atypical motif; sequence RYD. Biotin contacts are provided by Trp-116, Trp-132, and Trp-144.

The protein belongs to the avidin/streptavidin family. As to quaternary structure, homotetramer.

The protein resides in the secreted. Functionally, the biological function of streptavidin is not known. Forms a strong non-covalent specific complex with biotin (one molecule of biotin per subunit of streptavidin). This Streptomyces violaceus (Streptomyces venezuelae) protein is Streptavidin-V1.